We begin with the raw amino-acid sequence, 399 residues long: Argininosuccinate synthase (399 aa).

12-20 (AFSGGLDTS) lines the ATP pocket. Tyr-90 is a binding site for L-citrulline. Gly-120 serves as a coordination point for ATP. L-aspartate contacts are provided by Thr-122, Asn-126, and Asp-127. Residue Asn-126 participates in L-citrulline binding. Residues Arg-130, Ser-175, Glu-260, and Tyr-272 each contribute to the L-citrulline site.

The protein belongs to the argininosuccinate synthase family. Type 1 subfamily. In terms of assembly, homotetramer.

The protein localises to the cytoplasm. It carries out the reaction L-citrulline + L-aspartate + ATP = 2-(N(omega)-L-arginino)succinate + AMP + diphosphate + H(+). Its pathway is amino-acid biosynthesis; L-arginine biosynthesis; L-arginine from L-ornithine and carbamoyl phosphate: step 2/3. This is Argininosuccinate synthase from Methanothermobacter thermautotrophicus (strain ATCC 29096 / DSM 1053 / JCM 10044 / NBRC 100330 / Delta H) (Methanobacterium thermoautotrophicum).